The following is a 700-amino-acid chain: Elongation factor G 1 (700 aa).

The region spanning 8 to 290 is the tr-type G domain; sequence ERYRNIGISA…AVIDYLPSPA (283 aa). Residues 17 to 24, 88 to 92, and 142 to 145 each bind GTP; these read AHIDAGKT, DTPGH, and NKMD.

It belongs to the TRAFAC class translation factor GTPase superfamily. Classic translation factor GTPase family. EF-G/EF-2 subfamily.

The protein resides in the cytoplasm. In terms of biological role, catalyzes the GTP-dependent ribosomal translocation step during translation elongation. During this step, the ribosome changes from the pre-translocational (PRE) to the post-translocational (POST) state as the newly formed A-site-bound peptidyl-tRNA and P-site-bound deacylated tRNA move to the P and E sites, respectively. Catalyzes the coordinated movement of the two tRNA molecules, the mRNA and conformational changes in the ribosome. The sequence is that of Elongation factor G 1 from Bordetella parapertussis (strain 12822 / ATCC BAA-587 / NCTC 13253).